Here is a 222-residue protein sequence, read N- to C-terminus: 3-dehydroquinate dehydratase (222 aa).

Residues 29-31 and Arg-55 each bind 3-dehydroquinate; that span reads ELR. His-112 serves as the catalytic Proton donor/acceptor. Residue Lys-139 is the Schiff-base intermediate with substrate of the active site. Positions 178, 199, and 203 each coordinate 3-dehydroquinate.

Belongs to the type-I 3-dehydroquinase family. As to quaternary structure, homodimer.

The catalysed reaction is 3-dehydroquinate = 3-dehydroshikimate + H2O. It functions in the pathway metabolic intermediate biosynthesis; chorismate biosynthesis; chorismate from D-erythrose 4-phosphate and phosphoenolpyruvate: step 3/7. Its function is as follows. Involved in the third step of the chorismate pathway, which leads to the biosynthesis of aromatic amino acids. Catalyzes the cis-dehydration of 3-dehydroquinate (DHQ) and introduces the first double bond of the aromatic ring to yield 3-dehydroshikimate. In Dehalococcoides mccartyi (strain ATCC BAA-2100 / JCM 16839 / KCTC 5957 / BAV1), this protein is 3-dehydroquinate dehydratase.